The chain runs to 363 residues: Probable tRNA pseudouridine synthase D (363 aa).

D82 serves as the catalytic Nucleophile. The TRUD domain maps to 151-363 (YLPAYIGYQR…IARTDPRLFT (213 aa)).

It belongs to the pseudouridine synthase TruD family.

The enzyme catalyses uridine(13) in tRNA = pseudouridine(13) in tRNA. Could be responsible for synthesis of pseudouridine from uracil-13 in transfer RNAs. The chain is Probable tRNA pseudouridine synthase D from Sulfurisphaera tokodaii (strain DSM 16993 / JCM 10545 / NBRC 100140 / 7) (Sulfolobus tokodaii).